An 85-amino-acid chain; its full sequence is Small ribosomal subunit protein uS17 (85 aa).

The protein belongs to the universal ribosomal protein uS17 family. In terms of assembly, part of the 30S ribosomal subunit.

In terms of biological role, one of the primary rRNA binding proteins, it binds specifically to the 5'-end of 16S ribosomal RNA. The protein is Small ribosomal subunit protein uS17 of Geobacter sulfurreducens (strain ATCC 51573 / DSM 12127 / PCA).